A 173-amino-acid polypeptide reads, in one-letter code: MNRSEKAAIIEQLKSRAEAASIAVVTDFKGMPVEELTRLRVKLRENGCEYHVVKNTLARIAFTGTAHEPIGTRFKENCAVALGFDDPVAVAKALTDFAKTSKLFAIRHGSLEGKALSADQVSDLAKLPSKPELLARALGTMNAVPTNFVSLFANIIRSLLYVLKDLESKKAAA.

The protein belongs to the universal ribosomal protein uL10 family. In terms of assembly, part of the ribosomal stalk of the 50S ribosomal subunit. The N-terminus interacts with L11 and the large rRNA to form the base of the stalk. The C-terminus forms an elongated spine to which L12 dimers bind in a sequential fashion forming a multimeric L10(L12)X complex.

Functionally, forms part of the ribosomal stalk, playing a central role in the interaction of the ribosome with GTP-bound translation factors. This is Large ribosomal subunit protein uL10 from Nitratidesulfovibrio vulgaris (strain ATCC 29579 / DSM 644 / CCUG 34227 / NCIMB 8303 / VKM B-1760 / Hildenborough) (Desulfovibrio vulgaris).